A 267-amino-acid chain; its full sequence is uncharacterized protein (267 aa).

A WD repeat occupies P50–T90.

This is an uncharacterized protein from Deinococcus radiodurans (strain ATCC 13939 / DSM 20539 / JCM 16871 / CCUG 27074 / LMG 4051 / NBRC 15346 / NCIMB 9279 / VKM B-1422 / R1).